Reading from the N-terminus, the 29-residue chain is Cyclotide mden-B (29 aa).

The segment at residues 1-29 (GLPICGETCFTGKCYTPGCTCSYPICKKN) is a cross-link (cyclopeptide (Gly-Asn)). Disulfide bonds link Cys5-Cys19, Cys9-Cys21, and Cys14-Cys26.

It belongs to the cyclotide family. Moebius subfamily. This is a cyclic peptide.

In terms of biological role, probably participates in a plant defense mechanism. The polypeptide is Cyclotide mden-B (Melicytus dentatus (Tree violet)).